The chain runs to 243 residues: Carboxy-S-adenosyl-L-methionine synthase (243 aa).

S-adenosyl-L-methionine-binding positions include Tyr-39, 64–66, 89–90, 117–118, Asn-132, and Arg-199; these read GCS, DN, and DL.

This sequence belongs to the class I-like SAM-binding methyltransferase superfamily. Cx-SAM synthase family. In terms of assembly, homodimer.

The enzyme catalyses prephenate + S-adenosyl-L-methionine = carboxy-S-adenosyl-L-methionine + 3-phenylpyruvate + H2O. Functionally, catalyzes the conversion of S-adenosyl-L-methionine (SAM) to carboxy-S-adenosyl-L-methionine (Cx-SAM). This chain is Carboxy-S-adenosyl-L-methionine synthase, found in Pseudoalteromonas atlantica (strain T6c / ATCC BAA-1087).